The chain runs to 476 residues: NADH-quinone oxidoreductase subunit N (476 aa).

13 consecutive transmembrane segments (helical) span residues 7–27 (LTVE…GLLV), 33–53 (RGIA…AFGM), 59–79 (VVLG…LFLV), 100–120 (GEYY…ASSG), 122–142 (LVSL…LAAF), 156–176 (YVLL…LVYG), 199–219 (LLLG…AVPF), 237–257 (FLSV…FFGA), 265–285 (WVQL…LVAI), 305–325 (LLLG…YYAM), 363–383 (VAAL…MAGF), 399–419 (IWLA…YLLV), and 437–457 (VAPG…ILGI).

Belongs to the complex I subunit 2 family. As to quaternary structure, NDH-1 is composed of 14 different subunits. Subunits NuoA, H, J, K, L, M, N constitute the membrane sector of the complex.

The protein localises to the cell membrane. It carries out the reaction a quinone + NADH + 5 H(+)(in) = a quinol + NAD(+) + 4 H(+)(out). NDH-1 shuttles electrons from NADH, via FMN and iron-sulfur (Fe-S) centers, to quinones in the respiratory chain. The immediate electron acceptor for the enzyme in this species is believed to be a menaquinone. Couples the redox reaction to proton translocation (for every two electrons transferred, four hydrogen ions are translocated across the cytoplasmic membrane), and thus conserves the redox energy in a proton gradient. The polypeptide is NADH-quinone oxidoreductase subunit N (Moorella thermoacetica (strain ATCC 39073 / JCM 9320)).